Consider the following 948-residue polypeptide: Coatomer subunit beta-1 (948 aa).

HEAT repeat units follow at residues 49–87, 92–126, 127–164, 274–311, 312–349, and 391–428; these read ETIP…TDSK, PEMI…MKET, EIVE…LPQG, TAIR…TLHR, DIMV…HHNI, and EVAS…TNPK.

In terms of assembly, oligomeric complex that consists of at least the alpha, beta, beta', gamma, delta, epsilon and zeta subunits.

It localises to the cytoplasm. It is found in the golgi apparatus membrane. The protein resides in the cytoplasmic vesicle. The protein localises to the COPI-coated vesicle membrane. Its function is as follows. The coatomer is a cytosolic protein complex that binds to dilysine motifs and reversibly associates with Golgi non-clathrin-coated vesicles, which further mediate biosynthetic protein transport from the ER, via the Golgi up to the trans Golgi network. Coatomer complex is required for budding from Golgi membranes, and is essential for the retrograde Golgi-to-ER transport of dilysine-tagged proteins. This Arabidopsis thaliana (Mouse-ear cress) protein is Coatomer subunit beta-1.